The following is a 379-amino-acid chain: Cytochrome b (379 aa).

4 helical membrane-spanning segments follow: residues 34–54 (FGSL…LLAM), 78–99 (WLIR…YLHI), 114–134 (WNTG…GYVL), and 179–199 (FFAL…IHLT). Heme b is bound by residues histidine 84 and histidine 98. Heme b is bound by residues histidine 183 and histidine 197. Histidine 202 provides a ligand contact to a ubiquinone. A run of 4 helical transmembrane segments spans residues 227 to 247 (LKDI…AFFS), 289 to 309 (LGGV…PFLH), 321 to 341 (LSQM…WIGS), and 348 to 368 (FIII…ILFP).

It belongs to the cytochrome b family. In terms of assembly, the cytochrome bc1 complex contains 11 subunits: 3 respiratory subunits (MT-CYB, CYC1 and UQCRFS1), 2 core proteins (UQCRC1 and UQCRC2) and 6 low-molecular weight proteins (UQCRH/QCR6, UQCRB/QCR7, UQCRQ/QCR8, UQCR10/QCR9, UQCR11/QCR10 and a cleavage product of UQCRFS1). This cytochrome bc1 complex then forms a dimer. It depends on heme b as a cofactor.

It localises to the mitochondrion inner membrane. Component of the ubiquinol-cytochrome c reductase complex (complex III or cytochrome b-c1 complex) that is part of the mitochondrial respiratory chain. The b-c1 complex mediates electron transfer from ubiquinol to cytochrome c. Contributes to the generation of a proton gradient across the mitochondrial membrane that is then used for ATP synthesis. The protein is Cytochrome b (MT-CYB) of Dromaius novaehollandiae (Emu).